Here is a 161-residue protein sequence, read N- to C-terminus: Globin CTT-IX (161 aa).

A signal peptide spans 1-16 (MKFFIVLALCIVGAIA). In terms of domain architecture, Globin spans 18–161 (PVSSDQANAI…NIFGMIFAHL (144 aa)). The heme b site is built by histidine 76 and histidine 111.

It belongs to the globin family. As to quaternary structure, homodimer.

The chain is Globin CTT-IX (CTT-9) from Chironomus thummi thummi (Midge).